A 203-amino-acid chain; its full sequence is ATP-dependent Clp protease proteolytic subunit 2 (203 aa).

Serine 98 acts as the Nucleophile in catalysis. Histidine 123 is a catalytic residue.

The protein belongs to the peptidase S14 family. Fourteen ClpP subunits assemble into 2 heptameric rings which stack back to back to give a disk-like structure with a central cavity, resembling the structure of eukaryotic proteasomes.

It is found in the cytoplasm. It catalyses the reaction Hydrolysis of proteins to small peptides in the presence of ATP and magnesium. alpha-casein is the usual test substrate. In the absence of ATP, only oligopeptides shorter than five residues are hydrolyzed (such as succinyl-Leu-Tyr-|-NHMec, and Leu-Tyr-Leu-|-Tyr-Trp, in which cleavage of the -Tyr-|-Leu- and -Tyr-|-Trp bonds also occurs).. Cleaves peptides in various proteins in a process that requires ATP hydrolysis. Has a chymotrypsin-like activity. Plays a major role in the degradation of misfolded proteins. The chain is ATP-dependent Clp protease proteolytic subunit 2 from Chlamydia muridarum (strain MoPn / Nigg).